The following is a 161-amino-acid chain: NADH-quinone oxidoreductase subunit I (161 aa).

2 4Fe-4S ferredoxin-type domains span residues 52-82 (LRRY…IEAK) and 92-121 (TKYD…EGPN). Positions 62, 65, 68, 72, 101, 104, 107, and 111 each coordinate [4Fe-4S] cluster.

Belongs to the complex I 23 kDa subunit family. In terms of assembly, NDH-1 is composed of 14 different subunits. Subunits NuoA, H, J, K, L, M, N constitute the membrane sector of the complex. It depends on [4Fe-4S] cluster as a cofactor.

It localises to the cell inner membrane. It carries out the reaction a quinone + NADH + 5 H(+)(in) = a quinol + NAD(+) + 4 H(+)(out). In terms of biological role, NDH-1 shuttles electrons from NADH, via FMN and iron-sulfur (Fe-S) centers, to quinones in the respiratory chain. The immediate electron acceptor for the enzyme in this species is believed to be ubiquinone. Couples the redox reaction to proton translocation (for every two electrons transferred, four hydrogen ions are translocated across the cytoplasmic membrane), and thus conserves the redox energy in a proton gradient. This chain is NADH-quinone oxidoreductase subunit I, found in Orientia tsutsugamushi (strain Boryong) (Rickettsia tsutsugamushi).